Consider the following 241-residue polypeptide: DnaA regulatory inactivator Hda (241 aa).

Belongs to the DnaA family. HdA subfamily. In terms of assembly, the active form seems to be an ADP-bound monomer. Forms the RIDA complex (regulatory inactivation of DnaA) of ATP-DnaA, ADP-Hda and the DNA-loaded beta sliding clamp (dnaN).

Mediates the interaction of DNA replication initiator protein DnaA with DNA polymerase subunit beta sliding clamp (dnaN). Stimulates hydrolysis of ATP-DnaA to ADP-DnaA, rendering DnaA inactive for reinitiation, a process called regulatory inhibition of DnaA or RIDA. This is DnaA regulatory inactivator Hda from Citrobacter koseri (strain ATCC BAA-895 / CDC 4225-83 / SGSC4696).